Reading from the N-terminus, the 367-residue chain is Cystinosin (367 aa).

The N-terminal stretch at 1 to 22 is a signal peptide; sequence MRRNWLLILTLFLLMFIEKYES. The Lumenal segment spans residues 23–125; that stretch reads TVSLTAPPTV…LVIHSRIVSI (103 aa). 6 N-linked (GlcNAc...) asparagine glycosylation sites follow: Asn-36, Asn-51, Asn-66, Asn-84, Asn-104, and Asn-107. Residues 123-189 form the PQ-loop 1 domain; that stretch reads VSIINQVIGW…LLWVPYIQEE (67 aa). Residues 126-150 form a helical membrane-spanning segment; it reads INQVIGWIYFMAWSVSFYPQVIQNW. Over 151–159 the chain is Cytoplasmic; that stretch reads RRKSVIGLS. A helical transmembrane segment spans residues 160-179; the sequence is FDFLALNLTGFVAYSVFNIG. Position 166 (Asn-166) interacts with L-cystine. Over 180 to 202 the chain is Lumenal; it reads LLWVPYIQEEFLLKYPNGVNPVD. Residues 203–225 form a helical membrane-spanning segment; the sequence is SNDAFFSLHAVALTLIVILQCCL. Position 205 (Asp-205) interacts with H(+). Residues 226 to 234 lie on the Cytoplasmic side of the membrane; that stretch reads YERGNQRVS. A helical membrane pass occupies residues 235–257; it reads WPSIGFLVLAWLFVLVTMIVAAV. Topologically, residues 258 to 263 are lumenal; sequence GITTWL. Residues 263–328 form the PQ-loop 2 domain; the sequence is LQFLFCFSYI…QSYNNDQWTL (66 aa). Residues 264-289 form a helical membrane-spanning segment; sequence QFLFCFSYIKLIITLIKYFPQAYMNF. 3 residues coordinate L-cystine: Lys-273, Lys-280, and Tyr-281. Residues 290-298 lie on the Cytoplasmic side of the membrane; that stretch reads YYKSTKGWS. Residues 299–308 traverse the membrane as a helical segment; sequence IGGVLLDFTG. Asp-305 contacts L-cystine. Asp-305 is a H(+) binding site. At 309-331 the chain is on the lumenal side; that stretch reads GSFSLLQMFLQSYNNDQWTLIFG. A helical membrane pass occupies residues 332–354; sequence DPTKFGLGVFTIFFDVVFFIQHF. Asp-346 provides a ligand contact to H(+). Topologically, residues 355 to 367 are cytoplasmic; that stretch reads YLYRKKPGYDQLN. A Lysosomal targeting motif motif is present at residues 362–366; that stretch reads GYDQL.

This sequence belongs to the cystinosin family. As to quaternary structure, interacts with components of the V-ATPase complex. Interacts with components of the Ragulator complex. Interacts with RRAGA/RagA and RRAGC/RagC. Interacts with AP-3 complex subunit mu (AP3M1 or AP3M2).

The protein localises to the lysosome membrane. The protein resides in the melanosome membrane. The catalysed reaction is L-cystine(out) + H(+)(out) = L-cystine(in) + H(+)(in). With respect to regulation, switches between a lumen- and a cytosol-open conformation: pH induces conformational changes and shifts the equilibrium to facilitate the transition between the lumen- and cytosol-open conformation, thereby promoting cystine transport. Protonation of specific aspartate residues (Asp-205, Asp-305 and Asp-346) favors the cytosol-open conformation. Functionally, cystine/H(+) symporter that mediates export of cystine, the oxidized dimer of cysteine, from lysosomes. Plays an important role in melanin synthesis by catalyzing cystine export from melanosomes, possibly by inhibiting pheomelanin synthesis. In addition to cystine export, also acts as a positive regulator of mTORC1 signaling in kidney proximal tubular cells, via interactions with components of the v-ATPase and Ragulator complexes. Also involved in small GTPase-regulated vesicle trafficking and lysosomal localization of LAMP2A, independently of cystine transporter activity. This chain is Cystinosin, found in Mus musculus (Mouse).